The chain runs to 467 residues: ATP synthase subunit beta (467 aa).

154–161 (GGAGVGKT) serves as a coordination point for ATP.

Belongs to the ATPase alpha/beta chains family. As to quaternary structure, F-type ATPases have 2 components, CF(1) - the catalytic core - and CF(0) - the membrane proton channel. CF(1) has five subunits: alpha(3), beta(3), gamma(1), delta(1), epsilon(1). CF(0) has three main subunits: a(1), b(2) and c(9-12). The alpha and beta chains form an alternating ring which encloses part of the gamma chain. CF(1) is attached to CF(0) by a central stalk formed by the gamma and epsilon chains, while a peripheral stalk is formed by the delta and b chains.

It is found in the cell inner membrane. The enzyme catalyses ATP + H2O + 4 H(+)(in) = ADP + phosphate + 5 H(+)(out). In terms of biological role, produces ATP from ADP in the presence of a proton gradient across the membrane. The catalytic sites are hosted primarily by the beta subunits. This is ATP synthase subunit beta from Leptospira interrogans serogroup Icterohaemorrhagiae serovar copenhageni (strain Fiocruz L1-130).